A 446-amino-acid polypeptide reads, in one-letter code: Sulfoquinovose isomerase (446 aa).

The protein belongs to the SqvD family.

It catalyses the reaction 6-sulfo-beta-D-quinovose = 6-deoxy-6-sulfo-D-fructose. Part of the sulfo-TAL (or sulfo-SFT) pathway, a D-sulfoquinovose degradation pathway that produces sulfolactate (SL). Catalyzes the isomerization of sulfoquinovose (SQ) to 6-deoxy-6-sulfo-D-fructose (SF). In Priestia aryabhattai (Bacillus aryabhattai), this protein is Sulfoquinovose isomerase.